The following is a 117-amino-acid chain: Large ribosomal subunit protein bL20c (117 aa).

Belongs to the bacterial ribosomal protein bL20 family.

Its subcellular location is the plastid. Functionally, binds directly to 23S ribosomal RNA and is necessary for the in vitro assembly process of the 50S ribosomal subunit. It is not involved in the protein synthesizing functions of that subunit. In Euglena longa (Euglenophycean alga), this protein is Large ribosomal subunit protein bL20c (rpl20).